We begin with the raw amino-acid sequence, 178 residues long: ATP synthase subunit delta (178 aa).

Belongs to the ATPase delta chain family. In terms of assembly, F-type ATPases have 2 components, F(1) - the catalytic core - and F(0) - the membrane proton channel. F(1) has five subunits: alpha(3), beta(3), gamma(1), delta(1), epsilon(1). F(0) has three main subunits: a(1), b(2) and c(10-14). The alpha and beta chains form an alternating ring which encloses part of the gamma chain. F(1) is attached to F(0) by a central stalk formed by the gamma and epsilon chains, while a peripheral stalk is formed by the delta and b chains.

Its subcellular location is the cell membrane. Functionally, f(1)F(0) ATP synthase produces ATP from ADP in the presence of a proton or sodium gradient. F-type ATPases consist of two structural domains, F(1) containing the extramembraneous catalytic core and F(0) containing the membrane proton channel, linked together by a central stalk and a peripheral stalk. During catalysis, ATP synthesis in the catalytic domain of F(1) is coupled via a rotary mechanism of the central stalk subunits to proton translocation. In terms of biological role, this protein is part of the stalk that links CF(0) to CF(1). It either transmits conformational changes from CF(0) to CF(1) or is implicated in proton conduction. The chain is ATP synthase subunit delta from Streptococcus equinus (Streptococcus bovis).